We begin with the raw amino-acid sequence, 128 residues long: Ribosome-binding factor A (128 aa).

Belongs to the RbfA family. As to quaternary structure, monomer. Binds 30S ribosomal subunits, but not 50S ribosomal subunits or 70S ribosomes.

The protein localises to the cytoplasm. Its function is as follows. One of several proteins that assist in the late maturation steps of the functional core of the 30S ribosomal subunit. Associates with free 30S ribosomal subunits (but not with 30S subunits that are part of 70S ribosomes or polysomes). Required for efficient processing of 16S rRNA. May interact with the 5'-terminal helix region of 16S rRNA. The protein is Ribosome-binding factor A of Idiomarina loihiensis (strain ATCC BAA-735 / DSM 15497 / L2-TR).